Consider the following 678-residue polypeptide: DNA ligase (678 aa).

Residues 47–51 (DSDYD), 96–97 (SL), and Glu-122 each bind NAD(+). The N6-AMP-lysine intermediate role is filled by Lys-124. 4 residues coordinate NAD(+): Arg-145, Glu-182, Lys-300, and Lys-324. Zn(2+)-binding residues include Cys-418, Cys-421, Cys-436, and Cys-442. A BRCT domain is found at 602–678 (AHNESFTNKT…IFEEDLQNLL (77 aa)).

This sequence belongs to the NAD-dependent DNA ligase family. LigA subfamily. Requires Mg(2+) as cofactor. Mn(2+) serves as cofactor.

The enzyme catalyses NAD(+) + (deoxyribonucleotide)n-3'-hydroxyl + 5'-phospho-(deoxyribonucleotide)m = (deoxyribonucleotide)n+m + AMP + beta-nicotinamide D-nucleotide.. Its function is as follows. DNA ligase that catalyzes the formation of phosphodiester linkages between 5'-phosphoryl and 3'-hydroxyl groups in double-stranded DNA using NAD as a coenzyme and as the energy source for the reaction. It is essential for DNA replication and repair of damaged DNA. This is DNA ligase from Francisella philomiragia subsp. philomiragia (strain ATCC 25017 / CCUG 19701 / FSC 153 / O#319-036).